Reading from the N-terminus, the 359-residue chain is MSGKRVVVGLSGGVDSSVTAWLLKQQGYEVIGLFMKNWEDDDDSEYCSTRQDWLDVASVADVIGVDVEAVNFAAEYKDRVFADFLREYSAGRTPNPDVLCNAEIKFKAFLDHAMSLGANTIATGHYARVRQAANGKFELLKAFDHTKDQSYFLHRLNQAQLSRTLFPLGEIPKTRVREIAAEIGLPNAKKKDSTGICFIGERPFRDFLNRYLPTQPGPMKTPEGKVVGEHIGLAFYTLGQRKGIGLGGSRDGSGDAWYVARKDMASNTLYVVQGHDHPWLLTSELNAADLSWVAGEPPAAGATMAAKTRYRQSDAPCRVVAAEGDALKLSFAEPQWAVTPGQSAVLYDGDVCLGGGIIQ.

ATP is bound by residues 9 to 16 and Met35; that span reads GLSGGVDS. Residues 95-97 are interaction with target base in tRNA; that stretch reads NPD. Cys100 serves as the catalytic Nucleophile. Cys100 and Cys197 form a disulfide bridge. Gly124 serves as a coordination point for ATP. The interaction with tRNA stretch occupies residues 147 to 149; it reads KDQ. Catalysis depends on Cys197, which acts as the Cysteine persulfide intermediate. The interval 309–310 is interaction with tRNA; it reads RY.

The protein belongs to the MnmA/TRMU family.

It is found in the cytoplasm. It carries out the reaction S-sulfanyl-L-cysteinyl-[protein] + uridine(34) in tRNA + AH2 + ATP = 2-thiouridine(34) in tRNA + L-cysteinyl-[protein] + A + AMP + diphosphate + H(+). Functionally, catalyzes the 2-thiolation of uridine at the wobble position (U34) of tRNA, leading to the formation of s(2)U34. This is tRNA-specific 2-thiouridylase MnmA from Cupriavidus metallidurans (strain ATCC 43123 / DSM 2839 / NBRC 102507 / CH34) (Ralstonia metallidurans).